The sequence spans 534 residues: Probable bifunctional tRNA threonylcarbamoyladenosine biosynthesis protein (534 aa).

The tract at residues 1-324 (MICLGIEGTA…YRTDQVEVTW (324 aa)) is kae1. 3 residues coordinate Fe cation: His108, His112, and Tyr129. L-threonylcarbamoyladenylate-binding positions include 129–133 (YTSGG), Asp161, Gly174, Glu178, and Asn258. Asp286 is a Fe cation binding site. In terms of domain architecture, Protein kinase spans 335 to 534 (LPDNIKEKGA…DEIEKRGRYL (200 aa)). ATP-binding positions include 340-348 (KEKGAEADI) and Lys361. Asp455 acts as the Proton acceptor; for kinase activity in catalysis.

It in the N-terminal section; belongs to the KAE1 / TsaD family. This sequence in the C-terminal section; belongs to the protein kinase superfamily. Tyr protein kinase family. BUD32 subfamily. In terms of assembly, component of the KEOPS complex that consists of Kae1, Bud32, Cgi121 and Pcc1; the whole complex dimerizes. Requires Fe(2+) as cofactor.

Its subcellular location is the cytoplasm. The enzyme catalyses L-seryl-[protein] + ATP = O-phospho-L-seryl-[protein] + ADP + H(+). It carries out the reaction L-threonyl-[protein] + ATP = O-phospho-L-threonyl-[protein] + ADP + H(+). The catalysed reaction is L-threonylcarbamoyladenylate + adenosine(37) in tRNA = N(6)-L-threonylcarbamoyladenosine(37) in tRNA + AMP + H(+). Functionally, required for the formation of a threonylcarbamoyl group on adenosine at position 37 (t(6)A37) in tRNAs that read codons beginning with adenine. Is a component of the KEOPS complex that is probably involved in the transfer of the threonylcarbamoyl moiety of threonylcarbamoyl-AMP (TC-AMP) to the N6 group of A37. The Kae1 domain likely plays a direct catalytic role in this reaction. The Bud32 domain probably displays kinase activity that regulates Kae1 function. The sequence is that of Probable bifunctional tRNA threonylcarbamoyladenosine biosynthesis protein from Methanosphaera stadtmanae (strain ATCC 43021 / DSM 3091 / JCM 11832 / MCB-3).